The sequence spans 248 residues: Triosephosphate isomerase (248 aa).

Substrate is bound by residues N10 and K12. Catalysis depends on H95, which acts as the Electrophile. E165 (proton acceptor) is an active-site residue.

This sequence belongs to the triosephosphate isomerase family. As to quaternary structure, homodimer.

The enzyme catalyses D-glyceraldehyde 3-phosphate = dihydroxyacetone phosphate. It functions in the pathway carbohydrate biosynthesis; gluconeogenesis. The protein operates within carbohydrate degradation; glycolysis; D-glyceraldehyde 3-phosphate from glycerone phosphate: step 1/1. This is Triosephosphate isomerase (TPI1) from Eremothecium gossypii (strain ATCC 10895 / CBS 109.51 / FGSC 9923 / NRRL Y-1056) (Yeast).